We begin with the raw amino-acid sequence, 329 residues long: Malate dehydrogenase 2 (329 aa).

NAD(+) is bound at residue G12–A18. The substrate site is built by R93 and R99. Residues N106, Q113, and V130–N132 contribute to the NAD(+) site. Substrate contacts are provided by N132 and R163. Residue H188 is the Proton acceptor of the active site.

Belongs to the LDH/MDH superfamily. MDH type 2 family.

It catalyses the reaction (S)-malate + NAD(+) = oxaloacetate + NADH + H(+). Functionally, catalyzes the reversible oxidation of malate to oxaloacetate. This Burkholderia thailandensis (strain ATCC 700388 / DSM 13276 / CCUG 48851 / CIP 106301 / E264) protein is Malate dehydrogenase 2.